A 55-amino-acid polypeptide reads, in one-letter code: Large ribosomal subunit protein bL33 (55 aa).

Belongs to the bacterial ribosomal protein bL33 family.

The polypeptide is Large ribosomal subunit protein bL33 (Cereibacter sphaeroides (strain ATCC 17029 / ATH 2.4.9) (Rhodobacter sphaeroides)).